We begin with the raw amino-acid sequence, 405 residues long: Riboflavin biosynthesis protein RibBA (405 aa).

The tract at residues M1–T205 is DHBP synthase. D-ribulose 5-phosphate is bound by residues R30 to E31, D35, R144 to T148, and E168. E31 contributes to the Mg(2+) binding site. H147 provides a ligand contact to Mg(2+). Residues H206 to D405 are GTP cyclohydrolase II. GTP is bound at residue R256–S260. Zn(2+) is bound by residues C261, C272, and C274. Residues Q277, E299–R301, and T321 each bind GTP. Residue D333 is the Proton acceptor; for GTP cyclohydrolase activity of the active site. R335 serves as the catalytic Nucleophile; for GTP cyclohydrolase activity. T356 and K361 together coordinate GTP.

This sequence in the N-terminal section; belongs to the DHBP synthase family. The protein in the C-terminal section; belongs to the GTP cyclohydrolase II family. It depends on Mg(2+) as a cofactor. Mn(2+) serves as cofactor. Requires Zn(2+) as cofactor.

It carries out the reaction D-ribulose 5-phosphate = (2S)-2-hydroxy-3-oxobutyl phosphate + formate + H(+). The enzyme catalyses GTP + 4 H2O = 2,5-diamino-6-hydroxy-4-(5-phosphoribosylamino)-pyrimidine + formate + 2 phosphate + 3 H(+). It functions in the pathway cofactor biosynthesis; riboflavin biosynthesis; 2-hydroxy-3-oxobutyl phosphate from D-ribulose 5-phosphate: step 1/1. Its pathway is cofactor biosynthesis; riboflavin biosynthesis; 5-amino-6-(D-ribitylamino)uracil from GTP: step 1/4. In terms of biological role, catalyzes the conversion of D-ribulose 5-phosphate to formate and 3,4-dihydroxy-2-butanone 4-phosphate. Its function is as follows. Catalyzes the conversion of GTP to 2,5-diamino-6-ribosylamino-4(3H)-pyrimidinone 5'-phosphate (DARP), formate and pyrophosphate. The polypeptide is Riboflavin biosynthesis protein RibBA (Cytophaga hutchinsonii (strain ATCC 33406 / DSM 1761 / CIP 103989 / NBRC 15051 / NCIMB 9469 / D465)).